Consider the following 612-residue polypeptide: MTIKDARTPASTQNTAQADTAENTDTAEDTEAGKSIGWHKAYVEGSRPDLRVPVRQVHLTNGQSVTLYDTSGPYTDPLVDTDVRRGLAPLRENWIIARGDTEEYAGRPVRPEDDGIKHTSPRGGLRNLDAVFPGRPRQPRRGRDGNAVTQLAYARRGEITPEMEYVAVRENVSPEVVREEIAAGRAVLPANINHPEIEPMIIGKRFLVKVNANIGNSAVTSSIEEEVDKMTWATRWGADTVMDLSTGRNIHTTREWVLRNSPVPIGTVPLYQALEKVDGRAEELTWEIYKDTVIEQAEQGVDYMTVHAGVRLPYVPLTANRKTGIVSRGGSIMAAWCLAHHKESFLYENFEELCEILAAYDVTYSLGDGLRPGSIADANDEAQFAELRTLGELNRIAKRCSVQTMIEGPGHVPMHKIKENIDLQQEICDEAPFYTLGPLTTDVAPAYDHITSGIGAAMIAWWGTAMLCYVTPKEHLGLPNRDDVKTGVITYKIAAHAADLAKGHPGAQEWDDALSDARFEFRWEDQFNLALDPDTAREFHDETLPAEPAKTAHFCSMCGPKFCSMKISQSITEQFGGTAAAGATAEEVAAGMLQKSKEFAESGNRVYLPLAD.

Disordered regions lie at residues 1-33 and 105-146; these read MTIK…TEAG and AGRP…RDGN. Over residues 12-24 the composition is skewed to low complexity; that stretch reads TQNTAQADTAENT. The segment covering 105–117 has biased composition (basic and acidic residues); sequence AGRPVRPEDDGIK. Residues Asn-213, Met-242, Tyr-271, His-307, 327 to 329, 368 to 371, and Glu-407 contribute to the substrate site; these read SRG and DGLR. A Zn(2+)-binding site is contributed by His-411. Substrate is bound at residue Tyr-434. His-475 lines the Zn(2+) pocket. Positions 555, 558, and 563 each coordinate [4Fe-4S] cluster.

Belongs to the ThiC family. The cofactor is [4Fe-4S] cluster.

It catalyses the reaction 5-amino-1-(5-phospho-beta-D-ribosyl)imidazole + S-adenosyl-L-methionine = 4-amino-2-methyl-5-(phosphooxymethyl)pyrimidine + CO + 5'-deoxyadenosine + formate + L-methionine + 3 H(+). The protein operates within cofactor biosynthesis; thiamine diphosphate biosynthesis. Its function is as follows. Catalyzes the synthesis of the hydroxymethylpyrimidine phosphate (HMP-P) moiety of thiamine from aminoimidazole ribotide (AIR) in a radical S-adenosyl-L-methionine (SAM)-dependent reaction. The chain is Phosphomethylpyrimidine synthase from Streptomyces coelicolor (strain ATCC BAA-471 / A3(2) / M145).